We begin with the raw amino-acid sequence, 69 residues long: Large ribosomal subunit protein uL30 (69 aa).

It belongs to the universal ribosomal protein uL30 family. Part of the 50S ribosomal subunit.

This is Large ribosomal subunit protein uL30 from Rhizobium etli (strain ATCC 51251 / DSM 11541 / JCM 21823 / NBRC 15573 / CFN 42).